The primary structure comprises 416 residues: tRNA (guanine-N(7)-)-methyltransferase non-catalytic subunit wuho (416 aa).

The segment at 47–88 (TQSQESCPATATSTTAGKEPGGKEQQLAKQPEEGGTSASGSV) is disordered. The span at 49 to 62 (SQESCPATATSTTA) shows a compositional bias: polar residues. WD repeat units lie at residues 89–130 (ATST…ARLL), 177–216 (GHLS…DIHS), 220–258 (GHRE…ELLQ), and 317–357 (AGSW…PTTN).

Belongs to the WD repeat TRM82 family. As to quaternary structure, forms a heterodimer with the catalytic subunit Mettl1. Interacts with mei-P26 and weakly interacts with bgcn; required for the function or formation of the mei-P26-bgcn-bam-sxl complex. Interacts with nanos; may be involved in mei-P26-dependent derepression of the BMP signaling pathway. Interacts with Myc; the interaction may be mediated by mei-P26 and may be involved in the regulation of ribosome biogenesis. In testis, it is present at high level in hub cells, a niche for germline stem cells of testis. Ubiquitously expressed in all testicular cells throughout spermatogenesis. Ubiquitously expressed in all germline and somatic cells of the ovary.

Its subcellular location is the nucleus. The protein localises to the cytoplasm. It functions in the pathway tRNA modification; N(7)-methylguanine-tRNA biosynthesis. Its function is as follows. Required for the Mettl1-dependent formation of N(7)-methylguanine at position 46 (m7G46) in tRNA. In the Mettl1-wuho methyltransferase complex, it is required to stabilize and induce conformational changes of the catalytic subunit. Required for binding of nanos mRNA and repression of translation by the mei-P26-bgcn-bam-sxl complex. May cooperate with mei-P26 and nanos to derepress the BMP signaling pathway. May cooperate with mei-P26 to suppress expression of a subset of microRNAs. May cooperate with mei-P26 to regulate bam expression levels in germline cells during gametogenesis. Required to promote mitosis to meiosis transition during gametogenesis. May regulate germline cell division in part by regulating ribosome biogenesis. The chain is tRNA (guanine-N(7)-)-methyltransferase non-catalytic subunit wuho from Drosophila erecta (Fruit fly).